Here is a 234-residue protein sequence, read N- to C-terminus: Sugar fermentation stimulation protein A (234 aa).

Residues 201-220 constitute a DNA-binding region (H-T-H motif); that stretch reads LLSEAQNKGVEVLAYKAELS.

It belongs to the SfsA family.

Binds to DNA non-specifically. Could be a regulatory factor involved in maltose metabolism. The polypeptide is Sugar fermentation stimulation protein A (Salmonella typhi).